The primary structure comprises 762 residues: uncharacterized protein (762 aa).

Residues 1–26 form a disordered region; it reads MENLKSASPEEDSPRHGDNMGKPKRI. Residues 12-21 are compositionally biased toward basic and acidic residues; it reads DSPRHGDNMG. Residues 30–57 constitute a DNA-binding region (zn(2)-C6 fungal-type); the sequence is CDMCRKRKIRCDGKQPACSNCVSHGIPC. Residues 647-668 are disordered; sequence QSHVPPRISSNHSDTSVKSNSP.

Its subcellular location is the nucleus. This is an uncharacterized protein from Schizosaccharomyces pombe (strain 972 / ATCC 24843) (Fission yeast).